Here is a 364-residue protein sequence, read N- to C-terminus: Alanine racemase (364 aa).

The active-site Proton acceptor; specific for D-alanine is lysine 35. Lysine 35 bears the N6-(pyridoxal phosphate)lysine mark. Arginine 131 lines the substrate pocket. The active-site Proton acceptor; specific for L-alanine is tyrosine 256. Methionine 304 is a binding site for substrate.

This sequence belongs to the alanine racemase family. Requires pyridoxal 5'-phosphate as cofactor.

The catalysed reaction is L-alanine = D-alanine. It participates in amino-acid biosynthesis; D-alanine biosynthesis; D-alanine from L-alanine: step 1/1. Catalyzes the interconversion of L-alanine and D-alanine. May also act on other amino acids. The chain is Alanine racemase (alr) from Chromohalobacter salexigens (strain ATCC BAA-138 / DSM 3043 / CIP 106854 / NCIMB 13768 / 1H11).